Consider the following 553-residue polypeptide: 5'-nucleotidase domain-containing protein 2 (553 aa).

A disordered region spans residues 26–51 (SSSPSCPGCGPPGPGAHCPSTPRSAP). Asp-106 functions as the Nucleophile in the catalytic mechanism. Residues Asp-106, Asp-108, and Asp-391 each coordinate Mg(2+). Catalysis depends on Asp-108, which acts as the Proton donor.

The protein belongs to the 5'(3')-deoxyribonucleotidase family. In terms of assembly, interacts with tyrosine 3-monooxygenase TH; the interaction results in reduced phosphorylation and decreased catalytic activity of TH. Expressed in eye iridocorneal angle.

It localises to the cytoplasm. Its function is as follows. Promotes dephosphorylation of tyrosine 3-monooxygenase TH which decreases TH catalytic activity and leads to reduced synthesis of catecholamines including dopamine, noradrenaline and adrenaline. The exact mechanism of activity is unknown but may act as a phosphatase or promote the activity of phosphatases or may inhibit phosphorylation by acting as a barrier to interfere with protein kinase access. The chain is 5'-nucleotidase domain-containing protein 2 (Nt5dc2) from Rattus norvegicus (Rat).